Consider the following 509-residue polypeptide: Maturase K (509 aa).

This sequence belongs to the intron maturase 2 family. MatK subfamily.

Its subcellular location is the plastid. The protein localises to the chloroplast. In terms of biological role, usually encoded in the trnK tRNA gene intron. Probably assists in splicing its own and other chloroplast group II introns. This chain is Maturase K, found in Vachellia farnesiana (Sweet acacia).